The chain runs to 214 residues: MGLSHSHSVETRELVEKTGFSAEQIEHLHKRFKSLSGDEPTIRRGHLNDISDLVLNPIRSKIIDAFFDKRNLRKGPSGYVEEINFEEFLIIMSYFRPLSQHMDEENISVCRTDKLRFLFNMYDSDNDNKITLEEYRKVVEELLSGNPNIEKEMARSIADGAMLEAASICVGQMEPDQVYEGITFDDFLKIWEGIDIETKMHIRFLNMESIPSCR.

A lipid anchor (N-myristoyl glycine) is attached at G2. Positions 110–145 (CRTDKLRFLFNMYDSDNDNKITLEEYRKVVEELLSG) constitute an EF-hand domain. Residues D123, D125, D127, K129, and E134 each contribute to the Ca(2+) site.

The protein belongs to the calcineurin regulatory subunit family. CHP subfamily. In terms of assembly, monomer. Homodimer.

The protein resides in the nucleus. It localises to the cytoplasm. The protein localises to the membrane. Its subcellular location is the cell membrane. It is found in the cell projection. The protein resides in the lamellipodium. It localises to the ruffle membrane. Functionally, functions as an integral cofactor in cell pH regulation by controlling plasma membrane-type Na(+)/H(+) exchange activity. Promotes the induction of hematopoietic stem cell differentiation toward megakaryocytic lineage. Essential for the coupling of ERK cascade activation with the expression of ETS family genes in megakaryocytic differentiation. Also involved in granulocytic differentiation in a ERK-dependent manner. Inhibits the phosphatase activity of calcineurin. The protein is Calcineurin B homologous protein 3 of Xenopus laevis (African clawed frog).